The primary structure comprises 301 residues: GTPase Era (301 aa).

Residues 6-173 (KSGFVAIVGR…LEQTNANLEI (168 aa)) enclose the Era-type G domain. Positions 14–21 (GRPNVGKS) are G1. GTP is bound at residue 14–21 (GRPNVGKS). Residues 40–44 (QTTRN) are G2. A G3 region spans residues 61 to 64 (DTPG). Residues 61 to 65 (DTPGI) and 123 to 126 (NKID) contribute to the GTP site. The G4 stretch occupies residues 123–126 (NKID). Residues 152–154 (ISA) are G5. One can recognise a KH type-2 domain in the interval 204-282 (TREEVPHSVA…FLEIWVKVQK (79 aa)).

The protein belongs to the TRAFAC class TrmE-Era-EngA-EngB-Septin-like GTPase superfamily. Era GTPase family. As to quaternary structure, monomer.

Its subcellular location is the cytoplasm. The protein resides in the cell membrane. In terms of biological role, an essential GTPase that binds both GDP and GTP, with rapid nucleotide exchange. Plays a role in 16S rRNA processing and 30S ribosomal subunit biogenesis and possibly also in cell cycle regulation and energy metabolism. This chain is GTPase Era, found in Listeria welshimeri serovar 6b (strain ATCC 35897 / DSM 20650 / CCUG 15529 / CIP 8149 / NCTC 11857 / SLCC 5334 / V8).